Consider the following 142-residue polypeptide: Universal stress protein G (142 aa).

It belongs to the universal stress protein A family.

This is Universal stress protein G (uspG) from Salmonella typhi.